Here is a 227-residue protein sequence, read N- to C-terminus: Translation initiation factor 6 (227 aa).

Belongs to the eIF-6 family.

In terms of biological role, binds to the 50S ribosomal subunit and prevents its association with the 30S ribosomal subunit to form the 70S initiation complex. The protein is Translation initiation factor 6 of Pyrococcus horikoshii (strain ATCC 700860 / DSM 12428 / JCM 9974 / NBRC 100139 / OT-3).